Consider the following 440-residue polypeptide: Polyprenol-phosphate-mannose-dependent alpha-(1-2)-phosphatidylinositol mannoside mannosyltransferase (440 aa).

11 helical membrane passes run 15 to 35, 87 to 107, 109 to 129, 144 to 161, 164 to 184, 193 to 213, 224 to 244, 281 to 301, 316 to 336, 360 to 380, and 395 to 415; these read LAPT…VLWV, LAAI…SSAI, ATTL…LDVW, AWLA…LEPI, NFEF…DCVP, LLLG…LYFL, TAAT…SDSV, PRFI…VWAA, APVL…PVSW, VWFT…PITL, and LAGG…GLVS. The interval 419 to 440 is disordered; it reads THTGDAHETDEPLVPLARGEAG.

This sequence belongs to the glycosyltransferase 87 family.

The protein localises to the cell membrane. It participates in phospholipid metabolism; phosphatidylinositol metabolism. Its function is as follows. Responsible for the addition of alpha-(1-2) mannose branches to the linear mannan core on the biosynthetic pathway to mature Lipoarabinomannan (LAM). This is Polyprenol-phosphate-mannose-dependent alpha-(1-2)-phosphatidylinositol mannoside mannosyltransferase from Mycolicibacterium smegmatis (strain ATCC 700084 / mc(2)155) (Mycobacterium smegmatis).